We begin with the raw amino-acid sequence, 330 residues long: AH receptor-interacting protein (330 aa).

The PPIase FKBP-type domain occupies 31–121; the sequence is GTKATFHYRT…KDPLEGQRHC (91 aa). Residue Ser-43 is modified to Phosphoserine. TPR repeat units follow at residues 179–212, 231–264, and 265–298; these read VPLIHQEGNRLYREGHVKEAAAKYYDAIACLKNL, TPLLLNYCQCKLVVEEYYEVLDHCSSILNKYDDN, and VKAYFKRGKAHAAVWNAQEAQADFAKVLELDPAL.

As to quaternary structure, interacts with RET in the pituitary gland; this interaction prevents the formation of the AIP-survivin complex. Widely expressed. Higher levels seen in the heart, placenta and skeletal muscle. Not expressed in the liver.

It localises to the cytoplasm. In terms of biological role, may play a positive role in AHR-mediated (aromatic hydrocarbon receptor) signaling, possibly by influencing its receptivity for ligand and/or its nuclear targeting. Cellular negative regulator of the hepatitis B virus (HBV) X protein. This chain is AH receptor-interacting protein (AIP), found in Homo sapiens (Human).